The chain runs to 157 residues: Glutaredoxin-2, mitochondrial (157 aa).

The transit peptide at 1–19 (MSWYRAASVGRRLVASGRI) directs the protein to the mitochondrion. The 101-residue stretch at 50–150 (VNQIQETISN…PLVHQCYLNK (101 aa)) folds into the Glutaredoxin domain. Cys61 is a [2Fe-2S] cluster binding site. Lys67 contributes to the glutathione binding site. Cys70 is modified (S-glutathionyl cysteine; alternate). A disulfide bridge links Cys70 with Cys73. 2 residues coordinate glutathione: Gln102 and Val114. Position 146 (Cys146) interacts with [2Fe-2S] cluster.

This sequence belongs to the glutaredoxin family. As to quaternary structure, monomer; active form. Homodimer; inactive form. The homodimer is probably linked by 1 2Fe-2S cluster.

The protein resides in the mitochondrion. Its subcellular location is the nucleus. With respect to regulation, the 2Fe-2S present in the homodimer leads to inactivation of the enzyme. The 2Fe-2S may serve as a redox sensor: the presence of one-electron oxidants or reductants leading to the loss of the 2Fe-2S cluster, subsequent monomerization and activation of the enzyme. Glutathione-dependent oxidoreductase that facilitates the maintenance of mitochondrial redox homeostasis upon induction of apoptosis by oxidative stress. Involved in response to hydrogen peroxide and regulation of apoptosis caused by oxidative stress. Acts as a very efficient catalyst of monothiol reactions because of its high affinity for protein glutathione-mixed disulfides. Can receive electrons not only from glutathione (GSH), but also from thioredoxin reductase supporting both monothiol and dithiol reactions. Efficiently catalyzes both glutathionylation and deglutathionylation of mitochondrial complex I, which in turn regulates the superoxide production by the complex. Overexpression decreases the susceptibility to apoptosis and prevents loss of cardiolipin and cytochrome c release. The protein is Glutaredoxin-2, mitochondrial (Glrx2) of Rattus norvegicus (Rat).